Reading from the N-terminus, the 262-residue chain is Small ribosomal subunit protein eS4x (262 aa).

The region spanning 42-104 (LPLVLIIRNR…TNENFRLLYD (63 aa)) is the S4 RNA-binding domain.

This sequence belongs to the eukaryotic ribosomal protein eS4 family.

The protein resides in the cytoplasm. The protein is Small ribosomal subunit protein eS4x (RPS4D) of Arabidopsis thaliana (Mouse-ear cress).